The sequence spans 432 residues: Glutamate-1-semialdehyde 2,1-aminomutase (432 aa).

Residue lysine 272 is modified to N6-(pyridoxal phosphate)lysine.

The protein belongs to the class-III pyridoxal-phosphate-dependent aminotransferase family. HemL subfamily. In terms of assembly, homodimer. Pyridoxal 5'-phosphate is required as a cofactor.

The protein resides in the cytoplasm. It carries out the reaction (S)-4-amino-5-oxopentanoate = 5-aminolevulinate. Its pathway is porphyrin-containing compound metabolism; protoporphyrin-IX biosynthesis; 5-aminolevulinate from L-glutamyl-tRNA(Glu): step 2/2. It functions in the pathway porphyrin-containing compound metabolism; chlorophyll biosynthesis. The polypeptide is Glutamate-1-semialdehyde 2,1-aminomutase (Cyanothece sp. (strain PCC 7425 / ATCC 29141)).